The primary structure comprises 182 residues: Ribosome maturation factor RimM (182 aa).

The region spanning 103–182 is the PRC barrel domain; that stretch reads EDEFYWRELF…RIEVDWDPGF (80 aa).

This sequence belongs to the RimM family. As to quaternary structure, binds ribosomal protein uS19.

It is found in the cytoplasm. An accessory protein needed during the final step in the assembly of 30S ribosomal subunit, possibly for assembly of the head region. Essential for efficient processing of 16S rRNA. May be needed both before and after RbfA during the maturation of 16S rRNA. It has affinity for free ribosomal 30S subunits but not for 70S ribosomes. The protein is Ribosome maturation factor RimM of Vibrio campbellii (strain ATCC BAA-1116).